The sequence spans 354 residues: Fructose-bisphosphate aldolase (354 aa).

A D-glyceraldehyde 3-phosphate-binding site is contributed by serine 50. Aspartate 83 acts as the Proton donor in catalysis. Zn(2+)-binding residues include histidine 84, aspartate 105, glutamate 142, and histidine 198. Glycine 199 serves as a coordination point for dihydroxyacetone phosphate. Histidine 232 serves as a coordination point for Zn(2+). Dihydroxyacetone phosphate-binding positions include 233 to 235 (GSS) and 275 to 278 (NIDT).

It belongs to the class II fructose-bisphosphate aldolase family. In terms of assembly, homodimer. The cofactor is Zn(2+).

The enzyme catalyses beta-D-fructose 1,6-bisphosphate = D-glyceraldehyde 3-phosphate + dihydroxyacetone phosphate. The protein operates within carbohydrate biosynthesis; Calvin cycle. It functions in the pathway carbohydrate degradation; glycolysis; D-glyceraldehyde 3-phosphate and glycerone phosphate from D-glucose: step 4/4. With respect to regulation, activity is stimulated by Fe(2+) in autotrophically grown cells. Its function is as follows. Catalyzes the aldol condensation of dihydroxyacetone phosphate (DHAP or glycerone-phosphate) with glyceraldehyde 3-phosphate (G3P) to form fructose 1,6-bisphosphate (FBP) in gluconeogenesis and the reverse reaction in glycolysis. The sequence is that of Fructose-bisphosphate aldolase from Xanthobacter flavus.